Here is an 867-residue protein sequence, read N- to C-terminus: MSFFFKRTFGSINKKIIKSFRKIVEQINALETKMQSLSDEELADKTEEFKRELKNGKTLNDLLVPAFAVVREASRRFLNMRHFDVQLIGGMVLHNGMVSEMKTGEGKTLVATLAAYLNSLEGKGVHVVTVNDYLAKRDTEWMSKLYNSLGVSVAFITNDLTDEERKEAYSADIVYSTNNELAFDYLRDNMKFSREDMVQRGFNYAIVDEVDSILIDEARTPLIISGPVEENNQIYKHIDKIVTKLVDSDYEVDEKGRAVFLTEDGISQVEELLRSYNLISEKSSLYDAGNMIMTHYIDQALRAHKLFTADKDYIVKDGKVVIIDEFTGRMMEGRRYSDGLHQALEAKENLEIQYENQTLASVTFQNYFRMYNKLSGMTGTAATEAEELRDIYRLNVVKIPTNVTVKRIDVDDEIYGTEKEKFNAVLKFIKECHKRLQPVLVGTVSIENSEKLSALLRNHFLRHSVLNARYHEQEAYIIAQAGVPGNITIATNMAGRGTDIQLGGNAEMIAKVELKKIKNADEREKKYQEIIERVKRDKEIAMKAGGLCVIGTERHESRRIDDQLRGRSGRQGDPGLSKFFLSLEDDLMRIFGSDRMRSFLKRVGLKNNEAIHHPWINKALEKAQKKVEARNYDVRKSLLKFDDVINNQRKVIFEQRNHILGNEINDLFEVYSEVNKSVMESIVQGGYYEDYVEDIAKEFHIRYGITLDKKDLAKFLNKQEALDYINGKVKEFFTEKEKYFNGQQTTDLWNTIVKQVMIMTLDHLWREHLSILESLRQSIGLRAMGQKDPLNEFKREAFLIFECMLERGKELTIHRLAHFKLVDNQEVGGRLHPTRKDNLPKVSRNDKCPCNSGKKYKHCHGAVTVMN.

Residues Gln86, 104–108, and Asp499 contribute to the ATP site; that span reads GEGKT. Zn(2+) is bound by residues Cys848, Cys850, Cys859, and His860.

Belongs to the SecA family. In terms of assembly, monomer and homodimer. Part of the essential Sec protein translocation apparatus which comprises SecA, SecYEG and auxiliary proteins SecDF-YajC and YidC. It depends on Zn(2+) as a cofactor.

It is found in the cell membrane. The protein localises to the cytoplasm. It catalyses the reaction ATP + H2O + cellular proteinSide 1 = ADP + phosphate + cellular proteinSide 2.. Part of the Sec protein translocase complex. Interacts with the SecYEG preprotein conducting channel. Has a central role in coupling the hydrolysis of ATP to the transfer of proteins into and across the cell membrane, serving both as a receptor for the preprotein-SecB complex and as an ATP-driven molecular motor driving the stepwise translocation of polypeptide chains across the membrane. The sequence is that of Protein translocase subunit SecA from Wolbachia sp. subsp. Brugia malayi (strain TRS).